We begin with the raw amino-acid sequence, 370 residues long: Metalloproteinase (370 aa).

Positions 1-15 (MYLAYIFFLFATVSA) are cleaved as a signal peptide. The region spanning 170–370 (IVIEVLLVTD…DNYGKIFRMF (201 aa)) is the Peptidase M12B domain. Asparagine 226 carries N-linked (GalNAc...) asparagine glycosylation. Histidine 320 provides a ligand contact to Zn(2+). Glutamate 321 is an active-site residue. Positions 324 and 330 each coordinate Zn(2+).

This sequence belongs to the venom metalloproteinase (M12B) family. In terms of tissue distribution, expressed by the venom gland.

It is found in the secreted. Metalloprotease that may disrupt the cell matrix and the process of clotting blood or hemolymph. The polypeptide is Metalloproteinase (Tityus obscurus (Amazonian scorpion)).